Reading from the N-terminus, the 240-residue chain is Large ribosomal subunit protein uL2 (240 aa).

The segment covering 1-11 (MGKRLISQNRG) has biased composition (polar residues). Disordered regions lie at residues 1 to 28 (MGKR…KGAV) and 206 to 240 (GGGR…TGRK). 2 stretches are compositionally biased toward basic residues: residues 13–28 (GTPK…KGAV) and 224–240 (SPGR…TGRK).

The protein belongs to the universal ribosomal protein uL2 family. Part of the 50S ribosomal subunit. Forms a bridge to the 30S subunit in the 70S ribosome.

In terms of biological role, one of the primary rRNA binding proteins. Required for association of the 30S and 50S subunits to form the 70S ribosome, for tRNA binding and peptide bond formation. It has been suggested to have peptidyltransferase activity; this is somewhat controversial. Makes several contacts with the 16S rRNA in the 70S ribosome. The polypeptide is Large ribosomal subunit protein uL2 (Methanococcus maripaludis (strain C7 / ATCC BAA-1331)).